A 399-amino-acid chain; its full sequence is F-box protein At1g10110 (399 aa).

The F-box domain maps to 9-56 (PNWSELVTDILSLVFKHLSFTDFARAKTVCSSWYFASKSSSPRKNHTP).

The chain is F-box protein At1g10110 from Arabidopsis thaliana (Mouse-ear cress).